The sequence spans 203 residues: Glycerol-3-phosphate acyltransferase (203 aa).

The next 6 membrane-spanning stretches (helical) occupy residues 3–23, 61–81, 87–107, 118–138, 144–164, and 172–192; these read NLIL…LILA, ILTV…ASFL, VLWT…FLGF, GVLA…WFLV, ISSL…FIIH, and THAP…PNIV.

This sequence belongs to the PlsY family. In terms of assembly, probably interacts with PlsX.

It localises to the cell inner membrane. The catalysed reaction is an acyl phosphate + sn-glycerol 3-phosphate = a 1-acyl-sn-glycero-3-phosphate + phosphate. It participates in lipid metabolism; phospholipid metabolism. Its function is as follows. Catalyzes the transfer of an acyl group from acyl-phosphate (acyl-PO(4)) to glycerol-3-phosphate (G3P) to form lysophosphatidic acid (LPA). This enzyme utilizes acyl-phosphate as fatty acyl donor, but not acyl-CoA or acyl-ACP. The chain is Glycerol-3-phosphate acyltransferase from Campylobacter concisus (strain 13826).